The following is a 274-amino-acid chain: Probable cyclic nucleotide phosphodiesterase RPA0124 (274 aa).

7 residues coordinate Fe cation: D8, H10, D49, N79, H155, H194, and H196. AMP contacts are provided by residues H10, D49, and 79-80 (NH). H196 provides a ligand contact to AMP.

It belongs to the cyclic nucleotide phosphodiesterase class-III family. Requires Fe(2+) as cofactor.

The sequence is that of Probable cyclic nucleotide phosphodiesterase RPA0124 from Rhodopseudomonas palustris (strain ATCC BAA-98 / CGA009).